The following is a 312-amino-acid chain: Malate dehydrogenase (312 aa).

Residues 7–13 (GAAGGIG) and aspartate 34 contribute to the NAD(+) site. Substrate-binding residues include arginine 81 and arginine 87. NAD(+) contacts are provided by residues asparagine 94 and 117–119 (ITN). 2 residues coordinate substrate: asparagine 119 and arginine 153. The active-site Proton acceptor is histidine 177. Methionine 227 is a binding site for NAD(+).

Belongs to the LDH/MDH superfamily. MDH type 1 family. As to quaternary structure, homodimer.

The catalysed reaction is (S)-malate + NAD(+) = oxaloacetate + NADH + H(+). In terms of biological role, catalyzes the reversible oxidation of malate to oxaloacetate. The protein is Malate dehydrogenase of Salmonella newport (strain SL254).